The primary structure comprises 240 residues: 2,3,4,5-tetrahydropyridine-2,6-dicarboxylate N-acetyltransferase (240 aa).

The protein belongs to the transferase hexapeptide repeat family. DapH subfamily.

The enzyme catalyses (S)-2,3,4,5-tetrahydrodipicolinate + acetyl-CoA + H2O = L-2-acetamido-6-oxoheptanedioate + CoA. It functions in the pathway amino-acid biosynthesis; L-lysine biosynthesis via DAP pathway; LL-2,6-diaminopimelate from (S)-tetrahydrodipicolinate (acetylase route): step 1/3. In terms of biological role, catalyzes the transfer of an acetyl group from acetyl-CoA to tetrahydrodipicolinate. The polypeptide is 2,3,4,5-tetrahydropyridine-2,6-dicarboxylate N-acetyltransferase (Bacillus thuringiensis (strain Al Hakam)).